The sequence spans 169 residues: S-ribosylhomocysteine lyase (169 aa).

3 residues coordinate Fe cation: His-54, His-58, and Cys-128.

It belongs to the LuxS family. In terms of assembly, homodimer. The cofactor is Fe cation.

The catalysed reaction is S-(5-deoxy-D-ribos-5-yl)-L-homocysteine = (S)-4,5-dihydroxypentane-2,3-dione + L-homocysteine. Involved in the synthesis of autoinducer 2 (AI-2) which is secreted by bacteria and is used to communicate both the cell density and the metabolic potential of the environment. The regulation of gene expression in response to changes in cell density is called quorum sensing. Catalyzes the transformation of S-ribosylhomocysteine (RHC) to homocysteine (HC) and 4,5-dihydroxy-2,3-pentadione (DPD). The polypeptide is S-ribosylhomocysteine lyase (Shewanella putrefaciens (strain CN-32 / ATCC BAA-453)).